The chain runs to 260 residues: MALRRPMVAGNWKMNGNAALAQELFKKFASKLQNDSAEVVLCPPSIYLESVRQLLEDNKQALDGALVRMGAQNVSQHDFGAYTGEISGQMLKDSGCRYVIIGHSERRRMYGETSNIVAEKFAAAQKHGLTPILCVGESGPAREARRTFEVIAEELDIVIEKNGTMAFDNAIIAYEPLWAVGTGKSATPEQAQEVHAFIRKRLSEVSPFIGENVRILYGGSVTPSNAADLFAQPDVDGGLIGGASLNSSEFLSLCTIAMSA.

11-13 (NWK) is a substrate binding site. The active-site Electrophile is the His-103. Glu-175 functions as the Proton acceptor in the catalytic mechanism. Substrate contacts are provided by residues Gly-181, Ser-220, and 241–242 (GG).

This sequence belongs to the triosephosphate isomerase family. In terms of assembly, homodimer.

Its subcellular location is the cytoplasm. It catalyses the reaction D-glyceraldehyde 3-phosphate = dihydroxyacetone phosphate. It participates in carbohydrate biosynthesis; gluconeogenesis. Its pathway is carbohydrate degradation; glycolysis; D-glyceraldehyde 3-phosphate from glycerone phosphate: step 1/1. Involved in the gluconeogenesis. Catalyzes stereospecifically the conversion of dihydroxyacetone phosphate (DHAP) to D-glyceraldehyde-3-phosphate (G3P). In Shewanella denitrificans (strain OS217 / ATCC BAA-1090 / DSM 15013), this protein is Triosephosphate isomerase.